Here is a 358-residue protein sequence, read N- to C-terminus: ATP-dependent (S)-NAD(P)H-hydrate dehydratase (358 aa).

The YjeF C-terminal domain maps to L63–L354. (6S)-NADPHX contacts are provided by residues G163 and N220 to R226. Residues K261–D265 and G280–G289 each bind ATP. D290 contacts (6S)-NADPHX.

It belongs to the NnrD/CARKD family. Mg(2+) serves as cofactor.

It catalyses the reaction (6S)-NADHX + ATP = ADP + phosphate + NADH + H(+). It carries out the reaction (6S)-NADPHX + ATP = ADP + phosphate + NADPH + H(+). Catalyzes the dehydration of the S-form of NAD(P)HX at the expense of ATP, which is converted to ADP. Together with NAD(P)HX epimerase, which catalyzes the epimerization of the S- and R-forms, the enzyme allows the repair of both epimers of NAD(P)HX, a damaged form of NAD(P)H that is a result of enzymatic or heat-dependent hydration. The polypeptide is ATP-dependent (S)-NAD(P)H-hydrate dehydratase (Nematostella vectensis (Starlet sea anemone)).